The primary structure comprises 208 residues: ATP-dependent Clp protease proteolytic subunit (208 aa).

Ser107 acts as the Nucleophile in catalysis. The active site involves His132.

This sequence belongs to the peptidase S14 family. In terms of assembly, fourteen ClpP subunits assemble into 2 heptameric rings which stack back to back to give a disk-like structure with a central cavity, resembling the structure of eukaryotic proteasomes.

Its subcellular location is the cytoplasm. The catalysed reaction is Hydrolysis of proteins to small peptides in the presence of ATP and magnesium. alpha-casein is the usual test substrate. In the absence of ATP, only oligopeptides shorter than five residues are hydrolyzed (such as succinyl-Leu-Tyr-|-NHMec, and Leu-Tyr-Leu-|-Tyr-Trp, in which cleavage of the -Tyr-|-Leu- and -Tyr-|-Trp bonds also occurs).. Cleaves peptides in various proteins in a process that requires ATP hydrolysis. Has a chymotrypsin-like activity. Plays a major role in the degradation of misfolded proteins. This Methylorubrum extorquens (strain CM4 / NCIMB 13688) (Methylobacterium extorquens) protein is ATP-dependent Clp protease proteolytic subunit.